Reading from the N-terminus, the 76-residue chain is Small ribosomal subunit protein bS18 (76 aa).

The protein belongs to the bacterial ribosomal protein bS18 family. As to quaternary structure, part of the 30S ribosomal subunit. Forms a tight heterodimer with protein bS6.

Its function is as follows. Binds as a heterodimer with protein bS6 to the central domain of the 16S rRNA, where it helps stabilize the platform of the 30S subunit. This Nitrosomonas eutropha (strain DSM 101675 / C91 / Nm57) protein is Small ribosomal subunit protein bS18.